The chain runs to 38 residues: ITINVKCTSPQQCLRPCKDRFGQHAGGKCINGKCKCYP.

3 disulfides stabilise this stretch: cysteine 7–cysteine 29, cysteine 13–cysteine 34, and cysteine 17–cysteine 36.

This sequence belongs to the short scorpion toxin superfamily. Potassium channel inhibitor family. Alpha-KTx 02 subfamily. Expressed by the venom gland.

It is found in the secreted. In terms of biological role, inhibitor of voltage-gated potassium channels (Kv). It is capable of displacing the binding of radio-labeled noxiustoxin (AC P08815) to rat brain synaptosomes with high affinity (about 100 pM). It is also capable of inhibiting transient potassium-currents (resembling I(A)-type currents), in cultured rat cerebellar granule cells. About 50% of the peak currents are reduced by application of a 1.5 uM solution of this toxin. The chain is Potassium channel toxin alpha-KTx 2.3 from Centruroides limpidus (Mexican scorpion).